The chain runs to 436 residues: UPF0597 protein YhaM (436 aa).

This sequence belongs to the UPF0597 family.

In Escherichia coli O139:H28 (strain E24377A / ETEC), this protein is UPF0597 protein YhaM.